We begin with the raw amino-acid sequence, 287 residues long: Anthocyanidin 3-O-glucosyltransferase 7 (287 aa).

UDP-alpha-D-glucose is bound by residues alanine 162, glutamine 164, histidine 179, tryptophan 182, asparagine 183, serine 184, and glutamate 187. An anthocyanidin is bound at residue glycine 202. Aspartate 203 and glutamine 204 together coordinate UDP-alpha-D-glucose.

Belongs to the UDP-glycosyltransferase family. Expressed in cotyledons, hypocotyls, roots and leaves.

It catalyses the reaction an anthocyanidin + UDP-alpha-D-glucose + H(+) = an anthocyanidin 3-O-beta-D-glucoside + UDP. Its pathway is pigment biosynthesis; anthocyanin biosynthesis. In the presence of other necessary color factors, this glycosylation reaction allows the accumulation of anthocyanin pigments. The polypeptide is Anthocyanidin 3-O-glucosyltransferase 7 (GT7) (Manihot esculenta (Cassava)).